A 165-amino-acid chain; its full sequence is Putative inactive neutral ceramidase B (165 aa).

It belongs to the neutral ceramidase family. Ubiquitous. Expression is reduced with increasing age and in late-onset Alzheimer disease (LOAD) patients. This reduction is even more pronounced in patients with an affected mother.

The protein is Putative inactive neutral ceramidase B of Homo sapiens (Human).